Reading from the N-terminus, the 360-residue chain is Endolytic peptidoglycan transglycosylase RlpA (360 aa).

The first 17 residues, 1 to 17 (MRKEWLWVGIASVLLSA), serve as a signal peptide directing secretion. Residue Cys-18 is the site of N-palmitoyl cysteine attachment. Cys-18 carries S-diacylglycerol cysteine lipidation. One can recognise an SPOR domain in the interval 283 to 359 (SAISGGYVVQ…AQQQSFIVAA (77 aa)).

This sequence belongs to the RlpA family.

It is found in the cell membrane. Its function is as follows. Lytic transglycosylase with a strong preference for naked glycan strands that lack stem peptides. The chain is Endolytic peptidoglycan transglycosylase RlpA from Yersinia pestis.